Here is a 1225-residue protein sequence, read N- to C-terminus: Hybrid signal transduction histidine kinase C (1225 aa).

A helical transmembrane segment spans residues 8–28 (GFLLSTLFFTIISIILFYFFI). Residues 313 to 356 (LSPRSLSSSSSSSPSSSNNNGNTNNSGSLSPRSSNSNGSAVSPR) show a composition bias toward low complexity. Positions 313–407 (LSPRSLSSSS…SNGTISSPRT (95 aa)) are disordered. Over residues 357–368 (NVSSNSMSPRGQ) the composition is skewed to polar residues. Low complexity predominate over residues 370 to 388 (SDRSISSPRGSSSSSSSSS). Over residues 389 to 407 (NELAISPRNSNGTISSPRT) the composition is skewed to polar residues. Residues 426–653 (HLSHELRTPI…TFHFVIPLET (228 aa)) enclose the Histidine kinase domain. At His-429 the chain carries Phosphohistidine; by autocatalysis. The region spanning 669–784 (SVLVVDKNPY…HLVACLLASM (116 aa)) is the Response regulatory 1 domain. Asp-721 carries the 4-aspartylphosphate modification. 3 disordered regions span residues 809–832 (NNIN…SVYG), 941–974 (DDDS…DELN), and 1021–1076 (YLSP…PRAP). A compositionally biased stretch (polar residues) spans 945–954 (NNYCNTTGTM). Residues 1023–1037 (SPRSMNNNNGNNDNG) show a composition bias toward low complexity. Residues 1058-1072 (TSDTSSLAQSPNSLS) are compositionally biased toward polar residues. Positions 1078–1200 (KIMILDDNPV…CLELILRKWE (123 aa)) constitute a Response regulatory 2 domain. The residue at position 1127 (Asp-1127) is a 4-aspartylphosphate.

It localises to the membrane. The catalysed reaction is ATP + protein L-histidine = ADP + protein N-phospho-L-histidine.. Functionally, acts in a signal transduction pathway that regulates the slug versus culmination choice. Believed to be the first component of a phosphorelay that couples the sensing of ammonia to the modulation of PKA activity and hence activates culmination and spore germination. Ammonium transporters amtA and amtC are thought to respectively activate and inhibit dhkC phosphorelay. This protein probably undergoes an ATP-dependent autophosphorylation at conserved His residue in the kinase core, and a phosphoryl group is then transferred to a conserved aspartate residue in the receiver domain. In Dictyostelium discoideum (Social amoeba), this protein is Hybrid signal transduction histidine kinase C (dhkC).